A 138-amino-acid chain; its full sequence is ATP synthase epsilon chain (138 aa).

It belongs to the ATPase epsilon chain family. F-type ATPases have 2 components, CF(1) - the catalytic core - and CF(0) - the membrane proton channel. CF(1) has five subunits: alpha(3), beta(3), gamma(1), delta(1), epsilon(1). CF(0) has three main subunits: a, b and c.

The protein localises to the cell membrane. In terms of biological role, produces ATP from ADP in the presence of a proton gradient across the membrane. In Streptococcus pyogenes serotype M2 (strain MGAS10270), this protein is ATP synthase epsilon chain.